The sequence spans 255 residues: Imidazole glycerol phosphate synthase subunit HisF (255 aa).

Catalysis depends on residues Asp11 and Asp130.

Belongs to the HisA/HisF family. Heterodimer of HisH and HisF.

It localises to the cytoplasm. It catalyses the reaction 5-[(5-phospho-1-deoxy-D-ribulos-1-ylimino)methylamino]-1-(5-phospho-beta-D-ribosyl)imidazole-4-carboxamide + L-glutamine = D-erythro-1-(imidazol-4-yl)glycerol 3-phosphate + 5-amino-1-(5-phospho-beta-D-ribosyl)imidazole-4-carboxamide + L-glutamate + H(+). The protein operates within amino-acid biosynthesis; L-histidine biosynthesis; L-histidine from 5-phospho-alpha-D-ribose 1-diphosphate: step 5/9. Its function is as follows. IGPS catalyzes the conversion of PRFAR and glutamine to IGP, AICAR and glutamate. The HisF subunit catalyzes the cyclization activity that produces IGP and AICAR from PRFAR using the ammonia provided by the HisH subunit. The sequence is that of Imidazole glycerol phosphate synthase subunit HisF from Campylobacter jejuni subsp. jejuni serotype O:6 (strain 81116 / NCTC 11828).